Reading from the N-terminus, the 838-residue chain is Outer membrane usher protein YraJ (838 aa).

An N-terminal signal peptide occupies residues 1 to 40 (MPQRHHQGHKRTPKQLALIIKRCLPMVLTGSGMLCTTANA). An intrachain disulfide couples Cys815 to Cys837.

It belongs to the fimbrial export usher family.

It localises to the cell outer membrane. Functionally, part of the yraHIJK fimbrial operon. Could contribute to adhesion to various surfaces in specific environmental niches. Increases adhesion to eukaryotic T24 bladder epithelial cells in the absence of fim operon. Probably involved in the export and assembly of fimbrial subunits across the outer membrane. The chain is Outer membrane usher protein YraJ (yraJ) from Escherichia coli (strain K12).